Consider the following 122-residue polypeptide: Large ribosomal subunit protein uL18 (122 aa).

Belongs to the universal ribosomal protein uL18 family. Part of the 50S ribosomal subunit; part of the 5S rRNA/L5/L18/L25 subcomplex. Contacts the 5S and 23S rRNAs.

This is one of the proteins that bind and probably mediate the attachment of the 5S RNA into the large ribosomal subunit, where it forms part of the central protuberance. The chain is Large ribosomal subunit protein uL18 from Desulfitobacterium hafniense (strain DSM 10664 / DCB-2).